The sequence spans 138 residues: MERTFAMIKPDGVRRGLTPEILARIHNKGYRVVGLKQMMMPRETAEQHYGEHRERPFFGELVDFITGGPVVAIALEGENAIAGWRAMMGATNPANAAPGTIRADFATSTGENVTHGSDSPESAERELALFFGDGELLS.

ATP-binding residues include K9, F57, R85, T91, R102, and N112. The Pros-phosphohistidine intermediate role is filled by H115.

The protein belongs to the NDK family. Homotetramer. Mg(2+) serves as cofactor.

It localises to the cytoplasm. The catalysed reaction is a 2'-deoxyribonucleoside 5'-diphosphate + ATP = a 2'-deoxyribonucleoside 5'-triphosphate + ADP. It carries out the reaction a ribonucleoside 5'-diphosphate + ATP = a ribonucleoside 5'-triphosphate + ADP. Functionally, major role in the synthesis of nucleoside triphosphates other than ATP. The ATP gamma phosphate is transferred to the NDP beta phosphate via a ping-pong mechanism, using a phosphorylated active-site intermediate. This is Nucleoside diphosphate kinase from Deinococcus radiodurans (strain ATCC 13939 / DSM 20539 / JCM 16871 / CCUG 27074 / LMG 4051 / NBRC 15346 / NCIMB 9279 / VKM B-1422 / R1).